The sequence spans 183 residues: MKVIGIVGMPASGKGEASRIARDLGIPVVVMGDAIRERVKEAGLPPTDANFGAIAGKLRADLGMDAIARITIPRIEATGAPVALVDGIRGDYEVATFRDHFPDFTLIGIDSSFTTRYRRLKNRGRSDDSLTPEELRARDERELGWGLGRALEQADCRVTNEASLEEFAAEIRALLCRLGGREE.

An ATP-binding site is contributed by 8 to 15 (GMPASGKG).

The protein belongs to the UPF0200 family.

This is UPF0200 protein Memar_1556 from Methanoculleus marisnigri (strain ATCC 35101 / DSM 1498 / JR1).